Consider the following 399-residue polypeptide: L-methionine gamma-lyase (399 aa).

Residues 59–61 and 89–90 contribute to the pyridoxal 5'-phosphate site; these read YTR and GI. Residue Tyr-114 coordinates substrate. 209–211 contributes to the pyridoxal 5'-phosphate binding site; that stretch reads SAT. Position 212 is an N6-(pyridoxal phosphate)lysine (Lys-212). Arg-376 contacts substrate.

The protein belongs to the trans-sulfuration enzymes family. L-methionine gamma-lyase subfamily. Homotetramer; dimer of active dimers. It depends on pyridoxal 5'-phosphate as a cofactor.

It catalyses the reaction L-methionine + H2O = methanethiol + 2-oxobutanoate + NH4(+). The catalysed reaction is L-homocysteine + H2O = 2-oxobutanoate + hydrogen sulfide + NH4(+) + H(+). In terms of biological role, catalyzes the alpha,gamma-elimination of L-methionine to produce methanethiol, 2-oxobutanoate and ammonia; methanethiol (methyl mercaptan) is considered to be one of the main causes of the oral malodor in periodontal disease and may also play a role in the pathogenicity of P.gingivalis in that disease. Is also able to catalyze the alpha,gamma-elimination of L-homocysteine. The sequence is that of L-methionine gamma-lyase from Porphyromonas gingivalis (strain ATCC BAA-308 / W83).